The sequence spans 149 residues: CyanoQ (149 aa).

The first 21 residues, 1–21 (MSRLRSLLSLILVLVTTVLVS), serve as a signal peptide directing secretion. The N-palmitoyl cysteine moiety is linked to residue cysteine 22. Cysteine 22 carries the S-diacylglycerol cysteine lipid modification.

This sequence belongs to the PsbQ family. CyanoQ subfamily. In terms of assembly, PSII is composed of 1 copy each of membrane proteins PsbA, PsbB, PsbC, PsbD, PsbE, PsbF, PsbH, PsbI, PsbJ, PsbK, PsbL, PsbM, PsbT, PsbX, PsbY, PsbZ, Psb30/Ycf12, peripheral proteins PsbO, CyanoQ (PsbQ), PsbU, PsbV and a large number of cofactors. It forms dimeric complexes. Pull-down experiments with His-tagged PsbQ pull down dimeric, but not monomeric, PSII. The N-terminus is blocked. Upon expression in E.coli the N-terminus is modified with a diacylglycerol and an acyl group bound to two palmitates and one palmitoleate.

The protein localises to the cellular thylakoid membrane. In terms of biological role, one of the extrinsic, lumenal subunits of photosystem II (PSII), which stabilize and protect the oxygen-evolving complex. PSII is a light-driven water plastoquinone oxidoreductase, using light energy to abstract electrons from H(2)O, generating a proton gradient subsequently used for ATP formation. Plays a role in the stability of the oxygen-evolving center on the luminal side of PSII. Required for optimal photoautotrophic growth in the absence of Ca(2+) or Cl(-), functions in optimizing PSII water oxidation/O(2) evolving activity. Requires PsbO to bind to PSII. The chain is CyanoQ from Synechocystis sp. (strain ATCC 27184 / PCC 6803 / Kazusa).